Consider the following 265-residue polypeptide: H-2 class II histocompatibility antigen, A beta chain (265 aa).

The N-terminal stretch at 1–27 (MALQIPSLLLSAAVVVLMVLSSPGTEG) is a signal peptide. The beta-1 stretch occupies residues 28 to 122 (GDSERHFVYQ…PETHTSLRRL (95 aa)). The Extracellular segment spans residues 28–226 (GDSERHFVYQ…RAQSESAWSK (199 aa)). 2 cysteine pairs are disulfide-bonded: cysteine 42/cysteine 106 and cysteine 145/cysteine 201. N-linked (GlcNAc...) asparagine glycosylation is present at asparagine 46. The tract at residues 123-216 (EQPNVVISLS…SLKSPITVEW (94 aa)) is beta-2. The Ig-like C1-type domain maps to 125 to 213 (PNVVISLSRT…EHPSLKSPIT (89 aa)). The segment at 217–226 (RAQSESAWSK) is connecting peptide. A helical membrane pass occupies residues 227 to 247 (MLSGIGGCVLGVIFLGLGLFI). Residues 248–265 (RHRSQKGPRGPPPAGLLQ) lie on the Cytoplasmic side of the membrane.

It belongs to the MHC class II family. Post-translationally, ubiquitinated in immature dendritic cells leading to down-regulation of MHC class II.

Its subcellular location is the membrane. The chain is H-2 class II histocompatibility antigen, A beta chain (H2-Ab1) from Mus musculus (Mouse).